Consider the following 1961-residue polypeptide: Myosin-9 (1961 aa).

Ala2 is modified (N-acetylalanine). Residues Ala2–Leu838 are mediates interaction with LIMCH1. At Lys8 the chain carries N6-acetyllysine. Position 11 is a phosphotyrosine (Tyr11). Positions Gly27–Pro77 constitute a Myosin N-terminal SH3-like domain. The Myosin motor domain occupies Ser81–Asp776. Position 102 is an N6-acetyllysine (Lys102). Gly174–Thr181 contributes to the ATP binding site. An N6-acetyllysine mark is found at Lys299, Lys435, and Lys613. Phosphoserine is present on Ser628. Residues Leu654–His676 are actin-binding. Tyr754 is modified (phosphotyrosine). One can recognise an IQ domain in the interval Ile779–Ala808. The stretch at Ile841–Met1927 forms a coiled coil. At Lys850 the chain carries N6-succinyllysine. N6-acetyllysine is present on residues Lys860, Lys975, and Lys1024. Positions Arg1035–Gly1055 are enriched in basic and acidic residues. Residues Arg1035 to Ser1057 form a disordered region. A Phosphoserine modification is found at Ser1114. 2 positions are modified to N6-acetyllysine: Lys1234 and Lys1249. The disordered stretch occupies residues Leu1331–Lys1353. Residues Lys1332–Gln1344 show a composition bias toward basic and acidic residues. N6-acetyllysine occurs at positions 1358, 1393, 1405, 1411, 1460, and 1639. Lys1670 is subject to N6-succinyllysine. Ser1715 is subject to Phosphoserine. 3 positions are modified to N6-acetyllysine: Lys1794, Lys1803, and Lys1846. The tract at residues Arg1878–Ala1910 is disordered. Residue Arg1924 is modified to Omega-N-methylarginine. Positions Lys1938–Glu1961 are disordered. Ser1944 carries the post-translational modification Phosphoserine. Residues Asp1949–Glu1961 are compositionally biased toward basic and acidic residues.

The protein belongs to the TRAFAC class myosin-kinesin ATPase superfamily. Myosin family. In terms of assembly, myosin is a hexameric protein that consists of 2 heavy chain subunits (MHC), 2 alkali light chain subunits (MLC) and 2 regulatory light chain subunits (MLC-2). Interacts with RASIP1. Interacts with DDR1. Interacts with PDLIM2. Interacts with SVIL. Interacts with HTRA3. Interacts with Myo7a. Interacts with CFAP95. Interacts with LIMCH1; independently of the integration of MYH9 into the myosin complex. Interacts with RAB3A. Interacts with ZBED4. Interacts with S100A4; this interaction increases cell motility. In terms of processing, ISGylated. Ubiquitination.

The protein resides in the cytoplasm. The protein localises to the cytoskeleton. Its subcellular location is the cell cortex. It localises to the cytoplasmic vesicle. It is found in the secretory vesicle. The protein resides in the cortical granule. Its function is as follows. Cellular myosin that appears to play a role in cytokinesis, cell shape, and specialized functions such as secretion and capping. Required for cortical actin clearance prior to oocyte exocytosis. Promotes cell motility in conjunction with S100A4. During cell spreading, plays an important role in cytoskeleton reorganization, focal contact formation (in the margins but not the central part of spreading cells), and lamellipodial retraction; this function is mechanically antagonized by MYH10. The chain is Myosin-9 (Myh9) from Rattus norvegicus (Rat).